We begin with the raw amino-acid sequence, 293 residues long: Probable mediator of RNA polymerase II transcription subunit 15b (293 aa).

It belongs to the plant Mediator complex subunit 15 family. In terms of assembly, component of the Mediator complex.

The protein localises to the nucleus. In terms of biological role, component of the Mediator complex, a coactivator involved in the regulated transcription of nearly all RNA polymerase II-dependent genes. Mediator functions as a bridge to convey information from gene-specific regulatory proteins to the basal RNA polymerase II transcription machinery. The Mediator complex, having a compact conformation in its free form, is recruited to promoters by direct interactions with regulatory proteins and serves for the assembly of a functional preinitiation complex with RNA polymerase II and the general transcription factors. In Arabidopsis thaliana (Mouse-ear cress), this protein is Probable mediator of RNA polymerase II transcription subunit 15b (MED15B).